We begin with the raw amino-acid sequence, 458 residues long: DNA repair protein RadA (458 aa).

The segment at 10 to 27 (CQSCGYESPKWMGKCPGC) adopts a C4-type zinc-finger fold. 98–105 (GDPGIGKS) is an ATP binding site. The short motif at 255–259 (KNRFG) is the RadA KNRFG motif element. The tract at residues 354-458 (DAYLKVAGGV…AEALRTSLGG (105 aa)) is lon-protease-like.

It belongs to the RecA family. RadA subfamily. In terms of assembly, interacts with DisA.

Its function is as follows. DNA-dependent ATPase involved in processing of recombination intermediates, plays a role in repairing DNA breaks. Stimulates the branch migration of RecA-mediated strand transfer reactions, allowing the 3' invading strand to extend heteroduplex DNA faster. Binds ssDNA in the presence of ADP but not other nucleotides, has ATPase activity that is stimulated by ssDNA and various branched DNA structures, but inhibited by SSB. Does not have RecA's homology-searching function. Functionally, plays a role in DNA repair. Might stabilize or process Holliday junction intermediates. May work with DisA following methyl methanesulfonate (MMS) but not H(2)O(2) damage; DisA is a DNA integrity scanning protein with c-di-AMP synthase activity. The protein is DNA repair protein RadA of Bacillus subtilis (strain 168).